Consider the following 267-residue polypeptide: Membrane-spanning 4-domains subfamily A member 12 (267 aa).

Residues Met1–Leu91 lie on the Cytoplasmic side of the membrane. A helical membrane pass occupies residues Gly92 to Ile112. At Ser113–Leu120 the chain is on the extracellular side. A helical membrane pass occupies residues Gly121–Ile141. At Ser142 to Gly160 the chain is on the cytoplasmic side. A helical transmembrane segment spans residues Ser161–Val181. Over Asp182–Lys200 the chain is Extracellular. Residues Gly201–Ala221 traverse the membrane as a helical segment. The Cytoplasmic segment spans residues His222–Lys267. Residues Thr248–Lys267 are disordered.

This sequence belongs to the MS4A family.

The protein localises to the membrane. In terms of biological role, may be involved in signal transduction as a component of a multimeric receptor complex. The polypeptide is Membrane-spanning 4-domains subfamily A member 12 (MS4A12) (Homo sapiens (Human)).